The chain runs to 171 residues: ATP synthase subunit b (171 aa).

A helical transmembrane segment spans residues 10 to 30; that stretch reads GLYYGDSIFYAVCFLLLMWII.

Belongs to the ATPase B chain family. F-type ATPases have 2 components, F(1) - the catalytic core - and F(0) - the membrane proton channel. F(1) has five subunits: alpha(3), beta(3), gamma(1), delta(1), epsilon(1). F(0) has three main subunits: a(1), b(2) and c(10-14). The alpha and beta chains form an alternating ring which encloses part of the gamma chain. F(1) is attached to F(0) by a central stalk formed by the gamma and epsilon chains, while a peripheral stalk is formed by the delta and b chains.

The protein resides in the cell membrane. F(1)F(0) ATP synthase produces ATP from ADP in the presence of a proton or sodium gradient. F-type ATPases consist of two structural domains, F(1) containing the extramembraneous catalytic core and F(0) containing the membrane proton channel, linked together by a central stalk and a peripheral stalk. During catalysis, ATP synthesis in the catalytic domain of F(1) is coupled via a rotary mechanism of the central stalk subunits to proton translocation. Its function is as follows. Component of the F(0) channel, it forms part of the peripheral stalk, linking F(1) to F(0). This Levilactobacillus brevis (strain ATCC 367 / BCRC 12310 / CIP 105137 / JCM 1170 / LMG 11437 / NCIMB 947 / NCTC 947) (Lactobacillus brevis) protein is ATP synthase subunit b.